The following is a 44-amino-acid chain: Photosystem I reaction center subunit IX (44 aa).

The chain crosses the membrane as a helical span at residues 7 to 27 (YLSVAPVVSTLWFAALAGLLI).

The protein belongs to the PsaJ family.

The protein resides in the plastid. The protein localises to the chloroplast thylakoid membrane. Functionally, may help in the organization of the PsaE and PsaF subunits. In Lotus japonicus (Lotus corniculatus var. japonicus), this protein is Photosystem I reaction center subunit IX.